A 236-amino-acid chain; its full sequence is 4-hydroxy-tetrahydrodipicolinate reductase (236 aa).

Residues 11 to 16 (GASGRM), 92 to 94 (GTT), and 116 to 119 (GSNF) each bind NAD(+). Histidine 148 functions as the Proton donor/acceptor in the catalytic mechanism. Histidine 149 serves as a coordination point for (S)-2,3,4,5-tetrahydrodipicolinate. The Proton donor role is filled by lysine 152. Residue 158–159 (GS) coordinates (S)-2,3,4,5-tetrahydrodipicolinate.

It belongs to the DapB family.

The protein resides in the cytoplasm. It carries out the reaction (S)-2,3,4,5-tetrahydrodipicolinate + NAD(+) + H2O = (2S,4S)-4-hydroxy-2,3,4,5-tetrahydrodipicolinate + NADH + H(+). The enzyme catalyses (S)-2,3,4,5-tetrahydrodipicolinate + NADP(+) + H2O = (2S,4S)-4-hydroxy-2,3,4,5-tetrahydrodipicolinate + NADPH + H(+). It functions in the pathway amino-acid biosynthesis; L-lysine biosynthesis via DAP pathway; (S)-tetrahydrodipicolinate from L-aspartate: step 4/4. Its function is as follows. Catalyzes the conversion of 4-hydroxy-tetrahydrodipicolinate (HTPA) to tetrahydrodipicolinate. In Xylella fastidiosa (strain M23), this protein is 4-hydroxy-tetrahydrodipicolinate reductase.